Reading from the N-terminus, the 289-residue chain is tRNA pseudouridine synthase B (289 aa).

Residue Asp-38 is the Nucleophile of the active site.

Belongs to the pseudouridine synthase TruB family. Type 1 subfamily.

The enzyme catalyses uridine(55) in tRNA = pseudouridine(55) in tRNA. Responsible for synthesis of pseudouridine from uracil-55 in the psi GC loop of transfer RNAs. The protein is tRNA pseudouridine synthase B of Clostridium kluyveri (strain ATCC 8527 / DSM 555 / NBRC 12016 / NCIMB 10680 / K1).